Here is a 403-residue protein sequence, read N- to C-terminus: GDSL esterase/lipase At1g28590 (403 aa).

An N-terminal signal peptide occupies residues 1-27 (MASLDSLPAMKLVRFILSTLLVTSVNS). Residue serine 43 is the Nucleophile of the active site. N-linked (GlcNAc...) asparagine glycans are attached at residues asparagine 139 and asparagine 323. Residues aspartate 346 and histidine 349 contribute to the active site.

Belongs to the 'GDSL' lipolytic enzyme family.

It localises to the secreted. The sequence is that of GDSL esterase/lipase At1g28590 from Arabidopsis thaliana (Mouse-ear cress).